The sequence spans 186 residues: Transcriptional repressor NrdR (186 aa).

The tract at residues 1 to 24 is disordered; that stretch reads MRCPYCGGLDTQVKDSRPSDDASA. Residues 3–34 fold into a zinc finger; the sequence is CPYCGGLDTQVKDSRPSDDASAIRRRRICPDC. A compositionally biased stretch (basic and acidic residues) spans 12-24; sequence QVKDSRPSDDASA. The 91-residue stretch at 49–139 folds into the ATP-cone domain; sequence LTVVKRSGRR…VYKNFREARD (91 aa). The segment at 146 to 186 is disordered; the sequence is RLNGAGRPGGEPEPPDEAAPGPAAAPGEGGEAPARRARSRA.

The protein belongs to the NrdR family. It depends on Zn(2+) as a cofactor.

Functionally, negatively regulates transcription of bacterial ribonucleotide reductase nrd genes and operons by binding to NrdR-boxes. The polypeptide is Transcriptional repressor NrdR (Methylobacterium sp. (strain 4-46)).